A 151-amino-acid chain; its full sequence is Large-conductance mechanosensitive channel (151 aa).

Helical transmembrane passes span 12-32 (GNIVDLAVAVVIGTAFTALVT) and 71-91 (VLLSAAINFFLIAFAVYFLVV). A disordered region spans residues 122–151 (AQTNGDSPGRHGGRGTPSPTDGPRASTESQ).

This sequence belongs to the MscL family. As to quaternary structure, homopentamer.

It localises to the cell membrane. In terms of biological role, channel that opens in response to stretch forces in the membrane lipid bilayer. May participate in the regulation of osmotic pressure changes within the cell. The chain is Large-conductance mechanosensitive channel from Mycobacterium tuberculosis (strain CDC 1551 / Oshkosh).